Consider the following 155-residue polypeptide: Small ribosomal subunit protein uS7 (155 aa).

This sequence belongs to the universal ribosomal protein uS7 family. Part of the 30S ribosomal subunit. Contacts proteins S9 and S11.

Its function is as follows. One of the primary rRNA binding proteins, it binds directly to 16S rRNA where it nucleates assembly of the head domain of the 30S subunit. Is located at the subunit interface close to the decoding center, probably blocks exit of the E-site tRNA. The sequence is that of Small ribosomal subunit protein uS7 from Sulfurovum sp. (strain NBC37-1).